The sequence spans 318 residues: Malate dehydrogenase (318 aa).

NAD(+) contacts are provided by residues 11 to 17 (GAGGNVG) and D37. Positions 86 and 92 each coordinate substrate. NAD(+) is bound by residues N99 and 122 to 124 (VTN). Residues N124 and R155 each coordinate substrate. H179 (proton acceptor) is an active-site residue.

This sequence belongs to the LDH/MDH superfamily. MDH type 3 family.

It catalyses the reaction (S)-malate + NAD(+) = oxaloacetate + NADH + H(+). Functionally, catalyzes the reversible oxidation of malate to oxaloacetate. The sequence is that of Malate dehydrogenase from Nitratiruptor sp. (strain SB155-2).